The following is a 483-amino-acid chain: Glutamyl-tRNA(Gln) amidotransferase subunit A (483 aa).

Residues Lys-76 and Ser-151 each act as charge relay system in the active site. The active-site Acyl-ester intermediate is Ser-175.

It belongs to the amidase family. GatA subfamily. Heterotrimer of A, B and C subunits.

The catalysed reaction is L-glutamyl-tRNA(Gln) + L-glutamine + ATP + H2O = L-glutaminyl-tRNA(Gln) + L-glutamate + ADP + phosphate + H(+). Functionally, allows the formation of correctly charged Gln-tRNA(Gln) through the transamidation of misacylated Glu-tRNA(Gln) in organisms which lack glutaminyl-tRNA synthetase. The reaction takes place in the presence of glutamine and ATP through an activated gamma-phospho-Glu-tRNA(Gln). This Pseudomonas entomophila (strain L48) protein is Glutamyl-tRNA(Gln) amidotransferase subunit A.